The primary structure comprises 83 residues: Phosphoribosylformylglycinamidine synthase subunit PurS (83 aa).

Belongs to the PurS family. In terms of assembly, homodimer. Part of the FGAM synthase complex composed of 1 PurL, 1 PurQ and 2 PurS subunits.

It localises to the cytoplasm. It catalyses the reaction N(2)-formyl-N(1)-(5-phospho-beta-D-ribosyl)glycinamide + L-glutamine + ATP + H2O = 2-formamido-N(1)-(5-O-phospho-beta-D-ribosyl)acetamidine + L-glutamate + ADP + phosphate + H(+). It participates in purine metabolism; IMP biosynthesis via de novo pathway; 5-amino-1-(5-phospho-D-ribosyl)imidazole from N(2)-formyl-N(1)-(5-phospho-D-ribosyl)glycinamide: step 1/2. Functionally, part of the phosphoribosylformylglycinamidine synthase complex involved in the purines biosynthetic pathway. Catalyzes the ATP-dependent conversion of formylglycinamide ribonucleotide (FGAR) and glutamine to yield formylglycinamidine ribonucleotide (FGAM) and glutamate. The FGAM synthase complex is composed of three subunits. PurQ produces an ammonia molecule by converting glutamine to glutamate. PurL transfers the ammonia molecule to FGAR to form FGAM in an ATP-dependent manner. PurS interacts with PurQ and PurL and is thought to assist in the transfer of the ammonia molecule from PurQ to PurL. The polypeptide is Phosphoribosylformylglycinamidine synthase subunit PurS (Methanocaldococcus jannaschii (strain ATCC 43067 / DSM 2661 / JAL-1 / JCM 10045 / NBRC 100440) (Methanococcus jannaschii)).